The primary structure comprises 173 residues: UPF0102 protein Psyc_1908 (173 aa).

This sequence belongs to the UPF0102 family.

The sequence is that of UPF0102 protein Psyc_1908 from Psychrobacter arcticus (strain DSM 17307 / VKM B-2377 / 273-4).